Reading from the N-terminus, the 161-residue chain is Nucleotide-binding protein PSEEN4469 (161 aa).

Belongs to the YajQ family.

Nucleotide-binding protein. This is Nucleotide-binding protein PSEEN4469 from Pseudomonas entomophila (strain L48).